The primary structure comprises 316 residues: uncharacterized protein (316 aa).

This sequence belongs to the chlamydial CPn_0441/CT_007/TC_0275 family.

This is an uncharacterized protein from Chlamydia trachomatis serovar D (strain ATCC VR-885 / DSM 19411 / UW-3/Cx).